The primary structure comprises 503 residues: ATP synthase subunit alpha (503 aa).

169–176 serves as a coordination point for ATP; that stretch reads GDRGTGKT.

It belongs to the ATPase alpha/beta chains family. In terms of assembly, F-type ATPases have 2 components, CF(1) - the catalytic core - and CF(0) - the membrane proton channel. CF(1) has five subunits: alpha(3), beta(3), gamma(1), delta(1), epsilon(1). CF(0) has three main subunits: a(1), b(2) and c(9-12). The alpha and beta chains form an alternating ring which encloses part of the gamma chain. CF(1) is attached to CF(0) by a central stalk formed by the gamma and epsilon chains, while a peripheral stalk is formed by the delta and b chains.

It localises to the cell inner membrane. The catalysed reaction is ATP + H2O + 4 H(+)(in) = ADP + phosphate + 5 H(+)(out). Functionally, produces ATP from ADP in the presence of a proton gradient across the membrane. The alpha chain is a regulatory subunit. This Leptospira borgpetersenii serovar Hardjo-bovis (strain L550) protein is ATP synthase subunit alpha.